The sequence spans 511 residues: Pancreatic alpha-amylase (511 aa).

A signal peptide spans 1–15 (MKFFLLLFTIGFCWA). The residue at position 16 (Gln-16) is a Pyrrolidone carboxylic acid. Intrachain disulfides connect Cys-43–Cys-101, Cys-85–Cys-130, and Cys-156–Cys-175. 3 residues coordinate Ca(2+): Asn-115, Arg-173, and Asp-182. Arg-210 lines the chloride pocket. The active-site Nucleophile is Asp-212. His-216 is a binding site for Ca(2+). Glu-248 functions as the Proton donor in the catalytic mechanism. Asn-313 and Arg-352 together coordinate chloride. 2 disulfide bridges follow: Cys-393-Cys-399 and Cys-465-Cys-477. The N-linked (GlcNAc...) asparagine glycan is linked to Asn-476.

This sequence belongs to the glycosyl hydrolase 13 family. Monomer. Binds to the sea anemone inhibitor helianthamide. Ca(2+) serves as cofactor. It depends on chloride as a cofactor. In terms of tissue distribution, detected in pancreas (at protein level).

It is found in the secreted. Its subcellular location is the extracellular space. The catalysed reaction is Endohydrolysis of (1-&gt;4)-alpha-D-glucosidic linkages in polysaccharides containing three or more (1-&gt;4)-alpha-linked D-glucose units.. This Homo sapiens (Human) protein is Pancreatic alpha-amylase (AMY2A).